The following is a 219-amino-acid chain: Endonuclease III (219 aa).

Residues 117–136 (MEELLTLPGVARKTANVVLA) enclose the HhH domain. Residues cysteine 197, cysteine 204, cysteine 207, and cysteine 213 each contribute to the [4Fe-4S] cluster site.

The protein belongs to the Nth/MutY family. [4Fe-4S] cluster is required as a cofactor.

It carries out the reaction 2'-deoxyribonucleotide-(2'-deoxyribose 5'-phosphate)-2'-deoxyribonucleotide-DNA = a 3'-end 2'-deoxyribonucleotide-(2,3-dehydro-2,3-deoxyribose 5'-phosphate)-DNA + a 5'-end 5'-phospho-2'-deoxyribonucleoside-DNA + H(+). DNA repair enzyme that has both DNA N-glycosylase activity and AP-lyase activity. The DNA N-glycosylase activity releases various damaged pyrimidines from DNA by cleaving the N-glycosidic bond, leaving an AP (apurinic/apyrimidinic) site. The AP-lyase activity cleaves the phosphodiester bond 3' to the AP site by a beta-elimination, leaving a 3'-terminal unsaturated sugar and a product with a terminal 5'-phosphate. This is Endonuclease III from Synechocystis sp. (strain ATCC 27184 / PCC 6803 / Kazusa).